Reading from the N-terminus, the 1201-residue chain is Potassium channel subfamily T member 1 (1201 aa).

The segment at 1-28 (MARAKLKNSPSESNSHVKTVPPATTEDV) is disordered. Over 1–92 (MARAKLKNSP…FFIKNQRSSL (92 aa)) the chain is Cytoplasmic. The span at 8 to 17 (NSPSESNSHV) shows a compositional bias: polar residues. Residues 93–115 (RIRLFNFSLKLLTCLLYIVRVLL) form a helical membrane-spanning segment. The Extracellular portion of the chain corresponds to 116-152 (DNPEEGIGCWECEKQNYTLFNQSTKINWSHIFWVDRK). N-linked (GlcNAc...) asparagine glycosylation is found at Asn131 and Asn136. The chain crosses the membrane as a helical span at residues 153–175 (LPLWAVQVSIALISFLETMLLIY). Residues 176-184 (LSYKGNIWE) are Cytoplasmic-facing. Residues 185-206 (QIFRISFILEMINTVPFIITIF) traverse the membrane as a helical segment. At 207–216 (WPPLRNLFIP) the chain is on the extracellular side. Residues 217-229 (VFLNCWLAKYALE) form a helical membrane-spanning segment. Topologically, residues 230–249 (NMINDLHRAIQRTQSAMFNQ) are cytoplasmic. A helical transmembrane segment spans residues 250 to 272 (VLILICTLLCLVFTGTCGIQHLE). Residues 273–279 (RAGEKLS) lie on the Extracellular side of the membrane. Positions 280–300 (LFKSFYFCIVTFSTVGYGDVT) form an intramembrane region, pore-forming. 2 residues coordinate K(+): Val294 and Gly295. Topologically, residues 301–304 (PKIW) are extracellular. Residues 305–326 (PSQLLVVIMICVALVVLPLQFE) form a helical membrane-spanning segment. The Cytoplasmic portion of the chain corresponds to 327-1201 (ELVYLWMERQ…NPETRDETQL (875 aa)). The 137-residue stretch at 350 to 486 (EKHVVLCVSS…FHVKFADHVV (137 aa)) folds into the RCK N-terminal 1 domain. Na(+) contacts are provided by Leu511, His514, Ser536, and Asn538. 2 residues coordinate Zn(2+): Cys750 and Cys751. K(+)-binding residues include Arg753 and Lys756. Na(+) contacts are provided by Arg753 and Lys756. 2 residues coordinate Zn(2+): Cys758 and His760. 3 residues coordinate K(+): Asn761, Tyr769, and Gly770. Residue Phe771 coordinates Na(+). The RCK N-terminal 2 domain occupies 773–913 (NKLIIVSAET…QFRAKDSYSL (141 aa)). Residues Ser779, Leu810, Asp812, Gly834, and Asp857 each coordinate K(+). The interval 1175–1201 (NDGHSRKSSCSNKLGPCNPETRDETQL) is disordered.

It belongs to the potassium channel family. Calcium-activated (TC 1.A.1.3) subfamily. KCa4.1/KCNT1 sub-subfamily. Homotetramer; which constitutes the Na(+)-activated K(+) channel. Interacts with KCNT2; these heterodimer channels differ from the homomers in their unitary conductance, kinetic behavior, subcellular localization, and response to activation of protein kinase C. Phosphorylated by protein kinase C. Phosphorylation of the C-terminal domain increases channel activity.

The protein localises to the cell membrane. It carries out the reaction K(+)(in) = K(+)(out). Activated by high intracellular Na(+). In addition to activation by Na(+), is cooperatively activated by intracellular Cl(-) levels. Inhibited by Zn(2+). Activated upon stimulation of G-protein coupled receptors, such as CHRM1 and GRIA1. Functionally, sodium-activated K(+) channel. Acts as an important mediator of neuronal membrane excitability. Contributes to the delayed outward currents. Regulates of neuronal bursting in sensory neurons. Contributes to synaptic development and plasticity. This chain is Potassium channel subfamily T member 1 (KCNT1), found in Gallus gallus (Chicken).